Consider the following 1640-residue polypeptide: Phospholipase D C (1640 aa).

Residues 122–132 (SHRSNQSFNHS) are compositionally biased toward polar residues. 4 disordered regions span residues 122-247 (SHRS…KRLS), 264-283 (HNQN…HTTT), 439-499 (EKQQ…YKYN), and 521-541 (DDEY…PSQE). The span at 133–193 (NSTTPLNTTN…YSSDNSYLHN (61 aa)) shows a compositional bias: low complexity. A compositionally biased stretch (acidic residues) spans 197–231 (DIYEDEDDEDDEDDDDDEDEDDEGKEFEQDDEDES). Residues 232–247 (TISSMSLKNSQAKRLS) show a composition bias toward polar residues. Composition is skewed to low complexity over residues 264 to 273 (HNQNHQNHQN) and 467 to 499 (TTTT…YKYN). Acidic residues predominate over residues 521-534 (DDEYYYGEYDDEDD). The region spanning 1009–1036 (LYWSHHQKVVVVDQRIAFIGGLDLCFGR) is the PLD phosphodiesterase 1 domain. Catalysis depends on residues H1014, K1016, and D1021. Composition is skewed to low complexity over residues 1149-1274 (INNN…NNLN) and 1282-1296 (HNNS…QQQQ). The segment at 1149-1315 (INNNNNNANN…YQPPLPPQQR (167 aa)) is disordered. Residues 1297-1306 (QHHHHHHHHY) are compositionally biased toward basic residues. One can recognise a PLD phosphodiesterase 2 domain in the interval 1460–1487 (EQIYVHSKVLIVDDKIAIIGSANINDRS). Catalysis depends on residues H1465, K1467, and D1472.

This sequence belongs to the phospholipase D family.

The catalysed reaction is a 1,2-diacyl-sn-glycero-3-phosphocholine + H2O = a 1,2-diacyl-sn-glycero-3-phosphate + choline + H(+). Its activity is regulated as follows. Inhibited by butan-1-ol. Its function is as follows. Plays a role in cell growth. Hydrolyzes membrane phospholipids, such as PtdCho (phosphatidylcholine), producing the free headgroup and PtdOH (phosphatidic acid; signaling molecule on its own). Involved in the inhibition of actin-based motility and endocytosis. Its inhibition causes complete collapse of F-actin organization. In Dictyostelium discoideum (Social amoeba), this protein is Phospholipase D C (pldC).